The following is a 118-amino-acid chain: UPF0382 membrane protein C1782.12c (118 aa).

The signal sequence occupies residues 1-18 (MTIWNVAALTGLLSVGLG). The Lumenal segment spans residues 19-40 (AYGSHGLQKRVQDPHLLKSWST). Residues 41 to 61 (ACTYLMFHSLATMAVSLHPVY) form a helical membrane-spanning segment. Residues 62–67 (GKSRWT) are Cytoplasmic-facing. The chain crosses the membrane as a helical span at residues 68–88 (GPLLITGSCLFSGTIYGLCLL). Residues 89 to 96 (PKGHSLRR) lie on the Lumenal side of the membrane. Residues 97–117 (ILGPLTPIGGLVMLTGWATML) form a helical membrane-spanning segment. Val118 is a topological domain (cytoplasmic).

The protein belongs to the UPF0382 family.

It is found in the endoplasmic reticulum membrane. This Schizosaccharomyces pombe (strain 972 / ATCC 24843) (Fission yeast) protein is UPF0382 membrane protein C1782.12c.